A 402-amino-acid chain; its full sequence is Dual-specificity RNA methyltransferase RlmN (402 aa).

Catalysis depends on Glu-124, which acts as the Proton acceptor. In terms of domain architecture, Radical SAM core spans 130–370; the sequence is DADRGTLCVS…APVRTPRGRD (241 aa). Residues Cys-137 and Cys-375 are joined by a disulfide bond. Residues Cys-144, Cys-148, and Cys-151 each coordinate [4Fe-4S] cluster. Residues 199–200, Ser-231, 253–255, and Asn-332 each bind S-adenosyl-L-methionine; these read GE and SLH. The S-methylcysteine intermediate role is filled by Cys-375.

This sequence belongs to the radical SAM superfamily. RlmN family. The cofactor is [4Fe-4S] cluster.

It is found in the cytoplasm. It catalyses the reaction adenosine(2503) in 23S rRNA + 2 reduced [2Fe-2S]-[ferredoxin] + 2 S-adenosyl-L-methionine = 2-methyladenosine(2503) in 23S rRNA + 5'-deoxyadenosine + L-methionine + 2 oxidized [2Fe-2S]-[ferredoxin] + S-adenosyl-L-homocysteine. The enzyme catalyses adenosine(37) in tRNA + 2 reduced [2Fe-2S]-[ferredoxin] + 2 S-adenosyl-L-methionine = 2-methyladenosine(37) in tRNA + 5'-deoxyadenosine + L-methionine + 2 oxidized [2Fe-2S]-[ferredoxin] + S-adenosyl-L-homocysteine. Its function is as follows. Specifically methylates position 2 of adenine 2503 in 23S rRNA and position 2 of adenine 37 in tRNAs. m2A2503 modification seems to play a crucial role in the proofreading step occurring at the peptidyl transferase center and thus would serve to optimize ribosomal fidelity. This Rhizorhabdus wittichii (strain DSM 6014 / CCUG 31198 / JCM 15750 / NBRC 105917 / EY 4224 / RW1) (Sphingomonas wittichii) protein is Dual-specificity RNA methyltransferase RlmN.